A 116-amino-acid chain; its full sequence is NADH-ubiquinone oxidoreductase chain 3 (116 aa).

Helical transmembrane passes span 4–24, 56–76, and 88–108; these read LIITLIINTALSTIIVLIAFW, FFLIAITFLLFDLEIALLLPL, and TLILAYCLIILLTAGLAYEWI.

This sequence belongs to the complex I subunit 3 family. In terms of assembly, core subunit of respiratory chain NADH dehydrogenase (Complex I) which is composed of 45 different subunits. Interacts with TMEM186. Interacts with TMEM242.

It localises to the mitochondrion inner membrane. The enzyme catalyses a ubiquinone + NADH + 5 H(+)(in) = a ubiquinol + NAD(+) + 4 H(+)(out). Functionally, core subunit of the mitochondrial membrane respiratory chain NADH dehydrogenase (Complex I) which catalyzes electron transfer from NADH through the respiratory chain, using ubiquinone as an electron acceptor. Essential for the catalytic activity of complex I. The protein is NADH-ubiquinone oxidoreductase chain 3 of Osphranter robustus (Wallaroo).